Consider the following 229-residue polypeptide: Peptidyl-tRNA hydrolase (229 aa).

Residue Tyr-17 coordinates tRNA. His-22 acts as the Proton acceptor in catalysis. The tRNA site is built by Phe-74, Asn-76, and Asn-122. The tract at residues 194–229 (AGKTTRPRKPVRQTANAEASNNSPEASATPQNKDNT) is disordered. Residues 207-223 (TANAEASNNSPEASATP) show a composition bias toward low complexity.

The protein belongs to the PTH family. Monomer.

The protein resides in the cytoplasm. The catalysed reaction is an N-acyl-L-alpha-aminoacyl-tRNA + H2O = an N-acyl-L-amino acid + a tRNA + H(+). Its function is as follows. Hydrolyzes ribosome-free peptidyl-tRNAs (with 1 or more amino acids incorporated), which drop off the ribosome during protein synthesis, or as a result of ribosome stalling. Catalyzes the release of premature peptidyl moieties from peptidyl-tRNA molecules trapped in stalled 50S ribosomal subunits, and thus maintains levels of free tRNAs and 50S ribosomes. The protein is Peptidyl-tRNA hydrolase of Desulfovibrio desulfuricans (strain ATCC 27774 / DSM 6949 / MB).